Consider the following 1947-residue polypeptide: Sodium channel protein type 3 subunit alpha (1947 aa).

Over 1-128 (MAQALLVPPG…KIAIKILVHS (128 aa)) the chain is Cytoplasmic. The disordered stretch occupies residues 28–60 (RAAEEKAKKPKKEQDIDDENKPKPNSDLEAGKN). A compositionally biased stretch (basic and acidic residues) spans 46 to 57 (ENKPKPNSDLEA). Residues 110-455 (ILTPLNPVRK…QQMLEQLKKQ (346 aa)) form an I repeat. Residues 129 to 146 (LFSMLIMCTILTNCVFMT) traverse the membrane as a helical segment. At 147–152 (LSNPPD) the chain is on the extracellular side. A helical membrane pass occupies residues 153-174 (WTKNVEYTFTGIYTFESLIKIL). The Cytoplasmic segment spans residues 175–188 (ARGFCLEDFTFLRD). A helical transmembrane segment spans residues 189 to 206 (PWNWLDFSVIVMAYVTEF). The Extracellular segment spans residues 207–213 (VDLGNVS). The N-linked (GlcNAc...) asparagine glycan is linked to asparagine 211. A helical membrane pass occupies residues 214 to 235 (ALRTFRVLRALKTISVIPGLKT). The Cytoplasmic segment spans residues 236–249 (IVGALIQSVKKLSD). The helical transmembrane segment at 250 to 269 (VMILTVFCLSVFALIGLQLF) threads the bilayer. Residues 270–369 (MGNLRNKCLQ…NYGYTSFDTF (100 aa)) lie on the Extracellular side of the membrane. Asparagine 290, asparagine 296, asparagine 302, asparagine 307, and asparagine 339 each carry an N-linked (GlcNAc...) asparagine glycan. Residues 370-386 (SWAFLSLFRLMTQDYWE) constitute an intramembrane region (pore-forming). Residues 387–397 (NLYQLTLRAAG) lie on the Extracellular side of the membrane. A helical transmembrane segment spans residues 398 to 424 (KTYMIFFVLVIFLGSFYLVNLILAVVA). Topologically, residues 425-712 (MAYEEQNQAT…LVNLIVMDPF (288 aa)) are cytoplasmic. A phosphoserine mark is found at serine 484, serine 485, and serine 486. Disordered regions lie at residues 493–529 (SKSA…SESE) and 587–632 (VGSE…ETEV). Positions 500–509 (RNRRKKRRQR) are enriched in basic residues. Basic and acidic residues-rich tracts occupy residues 510-529 (EHLE…SESE) and 596-622 (DEHS…ERRN). Residues 693 to 965 (CCDSWLKVKH…QIAVGRMQKG (273 aa)) form an II repeat. A helical membrane pass occupies residues 713–730 (VDLAITICIVLNTLFMAM). The Extracellular segment spans residues 731–738 (EHYPMTEQ). Residues 739–763 (FSSVLTVGNLVFTGIFTAEMVLKII) traverse the membrane as a helical segment. Topologically, residues 764 to 773 (AMDPYYYFQE) are cytoplasmic. The helical transmembrane segment at 774 to 793 (GWNIFDGIIVSLSLMELGLA) threads the bilayer. The Extracellular segment spans residues 794 to 797 (NVEG). The helical transmembrane segment at 798 to 816 (LSVLRSFRLLRVFKLAKSW) threads the bilayer. Topologically, residues 817–834 (PTLNMLIKIIGNSVGALG) are cytoplasmic. A helical transmembrane segment spans residues 835 to 855 (NLTLVLAIIVFIFAVVGMQLF). The Extracellular portion of the chain corresponds to 856-880 (GKSYKECVCKINEDCKLPRWHMNDF). An intrachain disulfide couples cysteine 864 to cysteine 870. Residues 881-896 (FHSFLIVFRVLCGEWI) constitute an intramembrane region (pore-forming). Topologically, residues 897 to 907 (ETMWDCMEVAG) are extracellular. An intrachain disulfide couples cysteine 902 to cysteine 911. A helical membrane pass occupies residues 908–934 (QTMCLIVFMLVMVIGNLVVLNLFLALL). The Cytoplasmic segment spans residues 935–1157 (LSSFSSDNLA…RKTCYSIVEH (223 aa)). The disordered stretch occupies residues 1070–1113 (EEFSSESELEESKEKLNATSSSEGSTVDVAPPREGEQAEIEPEE). Residues 1140–1451 (KGKIWWNLRK…KKYYNAMKKL (312 aa)) form an III repeat. Residues 1158–1178 (NWFETFIVFMILLSSGALAFE) traverse the membrane as a helical segment. Residues 1179–1190 (DIYIEQRKTIKT) lie on the Extracellular side of the membrane. Residues 1191–1212 (MLEYADKVFTYIFILEMLLKWV) traverse the membrane as a helical segment. The Cytoplasmic portion of the chain corresponds to 1213–1218 (AYGFQT). Residues 1219-1244 (YFTNAWCWLDFLIVDVSLVSLVANAL) traverse the membrane as a helical segment. The Extracellular portion of the chain corresponds to 1245–1253 (GYSELGAIK). Residues 1254–1272 (SLRTLRALRPLRALSRFEG) traverse the membrane as a helical segment. The Cytoplasmic segment spans residues 1273–1285 (MRVVVNALVGAIP). A helical membrane pass occupies residues 1286 to 1308 (SIMNVLLVCLIFWLIFSIMGVNL). At 1309–1354 (FAGKFYHCVNMTTGSMFDMSEVNNFSDCQALGKQARWKNVKVNFDN) the chain is on the extracellular side. Residues cysteine 1316 and cysteine 1336 are joined by a disulfide bond. Asparagine 1318 and asparagine 1332 each carry an N-linked (GlcNAc...) asparagine glycan. The segment at residues 1355 to 1371 (VGAGYLALLQVATFKGW) is an intramembrane region (pore-forming). Topologically, residues 1372 to 1394 (MDIMYAAVDSRDVKLQPVYEENL) are extracellular. Residues 1395–1420 (YMYLYFVIFIIFGSFFTLNLFIGVII) form a helical membrane-spanning segment. Topologically, residues 1421–1478 (DNFNQQKKKFGGQDIFMTEEQKKYYNAMKKLGSKKPQKPIPRPANKFQGMVFDFVTRQ) are cytoplasmic. Serine 1453 bears the Phosphoserine mark. Residues 1460–1758 (IPRPANKFQG…WEKFDPDATQ (299 aa)) form an IV repeat. The chain crosses the membrane as a helical span at residues 1479 to 1497 (VFDISIMILICLNMVTMMV). Residues 1498–1505 (ETDDQSKY) lie on the Extracellular side of the membrane. A helical membrane pass occupies residues 1506–1529 (MTLVLSRINLVFIVLFTGEFLLKL). Topologically, residues 1530-1539 (ISLRYYYFTI) are cytoplasmic. Residues 1540-1557 (GWNIFDFVVVILSIVGMF) form a helical membrane-spanning segment. Topologically, residues 1558–1569 (LAELIEKYFVSP) are extracellular. The chain crosses the membrane as a helical span at residues 1570 to 1592 (TLFRVIRLARIGRILRLIKGAKG). The Cytoplasmic segment spans residues 1593 to 1605 (IRTLLFALMMSLP). A helical transmembrane segment spans residues 1606–1629 (ALFNIGLLLFLVMFIYAIFGMSNF). At 1630–1651 (AYVKKEAGIDDMFNFETFGNSM) the chain is on the extracellular side. An intramembrane region (pore-forming) is located at residues 1652–1664 (ICLFQITTSAGWD). Residues 1665–1696 (GLLAPILNSAPPDCDPDAIHPGSSVKGDCGNP) lie on the Extracellular side of the membrane. Residues 1697–1722 (SVGIFFFVSYIIISFLVVVNMYIAVI) form a helical membrane-spanning segment. Over 1723–1947 (LENFSVATEE…PEKESKGKEV (225 aa)) the chain is Cytoplasmic. Residues 1852–1881 (EEVSAAIIQRNYRCYLLKQRLKNISNTYDK) form the IQ domain. The segment at 1901 to 1947 (LNGNSTPEKTDGSSSTTSPPSYDSVTKPDKEKFEKDKPEKESKGKEV) is disordered. Residues 1926–1947 (TKPDKEKFEKDKPEKESKGKEV) show a composition bias toward basic and acidic residues.

The protein belongs to the sodium channel (TC 1.A.1.10) family. Nav1.3/SCN3A subfamily. In terms of assembly, heterooligomer of an alpha subunit, SCN3A, and 1 to 3 regulatory beta subunits including SCN1B and SCN2B; disulfide-linked with some beta subunits like SCN2B. Interacts with NEDD4L; could regulate expression of SCN3A at the plasma membrane through ubiquitination-regulated endocytosis. Post-translationally, may be ubiquitinated by NEDD4L; which would promote its endocytosis. Phosphorylation at Ser-1453 in a highly conserved cytoplasmic loop slows inactivation of the channel and reduces peak sodium currents. In terms of tissue distribution, expressed in enterochromaffin cells in both colon and small bowel (at protein level). Expressed in pancreatic alpha and beta cells.

It is found in the cell membrane. The protein resides in the basal cell membrane. It catalyses the reaction Na(+)(in) = Na(+)(out). Pore-forming subunit of Nav1.3, a voltage-gated sodium (Nav) channel that directly mediates the depolarizing phase of action potentials in excitable membranes. Navs, also called VGSCs (voltage-gated sodium channels) or VDSCs (voltage-dependent sodium channels), operate by switching between closed and open conformations depending on the voltage difference across the membrane. In the open conformation they allow Na(+) ions to selectively pass through the pore, along their electrochemical gradient. The influx of Na+ ions provokes membrane depolarization, initiating the propagation of electrical signals throughout cells and tissues. In some secretory cell types, it also participates in cell excitability through membrane depolarization and regulates cells responsiveness to stimuli triggering secretion. For instance, it controls the release of serotonin/5-hydroxytryptamine by enterochromaffin cells and is required for both glucagon- and glucose-induced insulin secretion in pancreatic endocrine cells. This chain is Sodium channel protein type 3 subunit alpha, found in Mus musculus (Mouse).